The following is a 158-amino-acid chain: Protein shisa-like-2B (158 aa).

The helical transmembrane segment at 65–85 threads the bilayer; that stretch reads IGALVGLGIAALVLLAFVISV.

The protein belongs to the shisa family.

The protein localises to the membrane. The sequence is that of Protein shisa-like-2B (Shisal2b) from Mus musculus (Mouse).